A 495-amino-acid chain; its full sequence is Probable endopolygalacturonase D (495 aa).

The first 16 residues, 1–16 (MKRSALLASFLPLALG), serve as a signal peptide directing secretion. An intrachain disulfide couples Cys154 to Cys169. PbH1 repeat units lie at residues 261-283 (MYNS…EIEN), 284-322 (TEYL…DIKQ), and 323-344 (SDFL…AVTS). N-linked (GlcNAc...) asparagine glycosylation is present at Asn295. Asp337 serves as the catalytic Proton donor. Cys339 and Cys355 are disulfide-bonded. His359 is an active-site residue. Asn371 carries an N-linked (GlcNAc...) asparagine glycan. PbH1 repeat units lie at residues 374–395 (VDGV…RIKS) and 403–425 (VYNV…DIQQ). N-linked (GlcNAc...) asparagine glycans are attached at residues Asn410 and Asn444. 2 disulfide bridges follow: Cys464–Cys469 and Cys487–Cys494. The stretch at 469–492 (CSNFVFTDVDITGGSDDSCNYPSS) is one PbH1 6 repeat.

This sequence belongs to the glycosyl hydrolase 28 family.

It localises to the secreted. The enzyme catalyses (1,4-alpha-D-galacturonosyl)n+m + H2O = (1,4-alpha-D-galacturonosyl)n + (1,4-alpha-D-galacturonosyl)m.. In terms of biological role, involved in maceration and soft-rotting of plant tissue. Hydrolyzes the 1,4-alpha glycosidic bonds of de-esterified pectate in the smooth region of the plant cell wall. This Aspergillus niger (strain ATCC MYA-4892 / CBS 513.88 / FGSC A1513) protein is Probable endopolygalacturonase D (pgaD).